Consider the following 552-residue polypeptide: MKKIAGWFTLAVLFVLYYIVPLPGRLLWQPDETRYAEISREMLASGDWIVPHFLGLRYFEKPVAGYWVNNLGQWLFGDGNFAVRFGAVLATVLSALLVFWLARRLLSGPRPAVVAVLIYLTSFLVYGVGSYAVLDPIFTLWMTAAMCSFWLGEQASSARGKAGGYILLGLACGMGFMTKGFLALAIPVIAVLPWVIAQRRWKSLFCFGPLAVLSAILISLPWVLAIAQHEPDYWRYFFWVEHIQRFAEDNAQHKAPFWYYLPILLIGLLPWLGLLPGALREGWRGRVSQGGDFYLLGWAVMPFLLFSIAKGKLPTYILPCFAPLAILMAGYVQRLTGENGKALRINGLINLLVGLGGMAAILLVLAPWGITGHPLFGAHEIGKVILGTIAFGVWALFGALSLYHSRRYWRWSAACLLGVALLIGTALPQQVMESKQPQALIQAAMPQLQASRYILSDSVGVAAGLAWELKRSDIYMYDKTGELQYGLSYPDAAGHLVKAEQFPAWLAEHRKQGAISLVLLLPRDGQINPALPSADMTLRKGRFLLLQYQQQP.

11 helical membrane passes run 4–24 (IAGWFTLAVLFVLYYIVPLPG), 81–101 (FAVRFGAVLATVLSALLVFWL), 113–133 (VVAVLIYLTSFLVYGVGSYAV), 176–196 (FMTKGFLALAIPVIAVLPWVI), 207–227 (FGPLAVLSAILISLPWVLAIA), 255–275 (APFWYYLPILLIGLLPWLGLL), 289–309 (QGGDFYLLGWAVMPFLLFSIA), 313–333 (LPTYILPCFAPLAILMAGYVQ), 351–371 (LLVGLGGMAAILLVLAPWGIT), 384–404 (VILGTIAFGVWALFGALSLYH), and 411–431 (WSAACLLGVALLIGTALPQQV).

It belongs to the glycosyltransferase 83 family.

It localises to the cell inner membrane. The enzyme catalyses 4-amino-4-deoxy-alpha-L-arabinopyranosyl di-trans,octa-cis-undecaprenyl phosphate + lipid IVA = lipid IIA + di-trans,octa-cis-undecaprenyl phosphate.. Its pathway is lipopolysaccharide metabolism; 4-amino-4-deoxy-beta-L-arabinose-lipid A biosynthesis. Functionally, catalyzes the transfer of the L-Ara4N moiety of the glycolipid undecaprenyl phosphate-alpha-L-Ara4N to lipid A. The modified arabinose is attached to lipid A and is required for resistance to polymyxin and cationic antimicrobial peptides. The polypeptide is Undecaprenyl phosphate-alpha-4-amino-4-deoxy-L-arabinose arabinosyl transferase (Edwardsiella ictaluri (strain 93-146)).